The following is a 335-amino-acid chain: Putative serine/threonine-protein kinase 040L (335 aa).

In terms of domain architecture, Protein kinase spans 33-329 (YYYQEFHDEG…DRLTELHHHL (297 aa)). Residues 39–47 (HDEGGYGSI) and Lys62 contribute to the ATP site. The active-site Proton acceptor is the Asp196.

Belongs to the protein kinase superfamily. Ser/Thr protein kinase family.

The chain is Putative serine/threonine-protein kinase 040L from Invertebrate iridescent virus 3 (IIV-3).